We begin with the raw amino-acid sequence, 245 residues long: 1-(5-phosphoribosyl)-5-[(5-phosphoribosylamino)methylideneamino] imidazole-4-carboxamide isomerase (245 aa).

Residue Asp-8 is the Proton acceptor of the active site. The active-site Proton donor is the Asp-130.

Belongs to the HisA/HisF family.

It is found in the cytoplasm. It catalyses the reaction 1-(5-phospho-beta-D-ribosyl)-5-[(5-phospho-beta-D-ribosylamino)methylideneamino]imidazole-4-carboxamide = 5-[(5-phospho-1-deoxy-D-ribulos-1-ylimino)methylamino]-1-(5-phospho-beta-D-ribosyl)imidazole-4-carboxamide. It participates in amino-acid biosynthesis; L-histidine biosynthesis; L-histidine from 5-phospho-alpha-D-ribose 1-diphosphate: step 4/9. The sequence is that of 1-(5-phosphoribosyl)-5-[(5-phosphoribosylamino)methylideneamino] imidazole-4-carboxamide isomerase from Pseudomonas putida (strain GB-1).